The sequence spans 872 residues: Metabotropic glutamate receptor 2 (872 aa).

A signal peptide spans 1 to 18 (MGSLLALLALLLLWGAVA). Topologically, residues 19–567 (EGPAKKVLTL…QEYIRWGDAW (549 aa)) are extracellular. Cys50 and Cys92 are joined by a disulfide. Residues Arg57, Arg61, Ser145, Ala166, and Thr168 each contribute to the L-glutamate site. N-linked (GlcNAc...) asparagine glycans are attached at residues Asn203 and Asn286. 7 disulfides stabilise this stretch: Cys234–Cys518, Cys355–Cys362, Cys400–Cys407, Cys500–Cys519, Cys504–Cys522, Cys525–Cys537, and Cys540–Cys553. Position 295 (Asp295) interacts with L-glutamate. N-linked (GlcNAc...) asparagine glycosylation is present at Asn338. Lys377 lines the L-glutamate pocket. A glycan (N-linked (GlcNAc...) asparagine) is linked at Asn402. Residue Asn547 is glycosylated (N-linked (GlcNAc...) asparagine). A helical membrane pass occupies residues 568-590 (AVGPVTIACLGALATLFVLGVFV). Residues 591 to 604 (RHNATPVVKASGRE) lie on the Cytoplasmic side of the membrane. Residues 605–625 (LCYILLGGVFLCYCMTFIFIA) form a helical membrane-spanning segment. Topologically, residues 626 to 636 (KPSTAVCTLRR) are extracellular. Cysteines 632 and 721 form a disulfide. Residues 637–655 (LGLGTAFSVCYSALLTKTN) form a helical membrane-spanning segment. Topologically, residues 656–679 (RIARIFGGAREGAQRPRFISPASQ) are cytoplasmic. The tract at residues 677-685 (ASQVAICLA) is important for interaction with HTR2A. Residues 680–700 (VAICLALISGQLLIVVAWLVV) form a helical membrane-spanning segment. At 701 to 725 (EAPGTGKETAPERREVVTLRCNHRD) the chain is on the extracellular side. Residues 726-747 (ASMLGSLAYNVLLIALCTLYAF) form a helical membrane-spanning segment. The Cytoplasmic segment spans residues 748–760 (KTRKCPENFNEAK). A helical membrane pass occupies residues 761–783 (FIGFTMYTTCIIWLAFLPIFYVT). At 784-793 (SSDYRVQTTT) the chain is on the extracellular side. A helical membrane pass occupies residues 794 to 819 (MCVSVSLSGSVVLGCLFAPKLHIILF). At 820 to 872 (QPQKNVVSHRAPTSRFGSAAARASSSLGQGSGSQFVPTVCNGREVVDSTTSSL) the chain is on the cytoplasmic side.

Belongs to the G-protein coupled receptor 3 family. Forms heterodimers with GRM3 or GRM4. Interacts with TAMALIN. Interacts with HTR2A. In terms of assembly, (Microbial infection) Interacts with H5N6 virus protein HA. As to quaternary structure, (Microbial infection) Interacts with rabies virus protein G. (Microbial infection) Interacts with SARS-CoV-2 virus spike protein S. In terms of tissue distribution, detected in brain cortex (at protein level). Widely expressed in different regions of the adult brain as well as in fetal brain.

It localises to the cell membrane. Its subcellular location is the synapse. It is found in the cell projection. The protein resides in the dendrite. Its function is as follows. Dimeric G protein-coupled receptor which is activated by the excitatory neurotransmitter L-glutamate. Plays critical roles in modulating synaptic transmission and neuronal excitability. Upon activation by glutamate, inhibits presynaptic calcium channels, reducing further glutamate release and dampening excitatory signaling. Mechanistically, ligand binding causes a conformation change that triggers signaling via guanine nucleotide-binding proteins (G proteins) and modulates the activity of down-stream effectors, such as adenylate cyclase. May mediate suppression of neurotransmission or may be involved in synaptogenesis or synaptic stabilization. In terms of biological role, (Microbial infection) Plays an important role in influenza virus internalization. (Microbial infection) Acts as a host entry factor for rabies virus that hijacks the endocytosis of GRM2 to enter cells. Functionally, (Microbial infection) Acts as a host entry factor for SARS-CoV-2 that hijacks the endocytosis of GRM2 to enter cells. The chain is Metabotropic glutamate receptor 2 from Homo sapiens (Human).